The primary structure comprises 202 residues: Transcription factor MUTE (202 aa).

Positions 1-49 constitute a bHLH domain; it reads MSHIAVERNRRRQMNEHLKSLRSLTPCFYIKRGDQASIIGGVIEFIKEL.

As to quaternary structure, homodimer. As to expression, leaf epidermis and flowers.

The protein localises to the nucleus. In terms of biological role, transcription factor. Together with FMA and SPCH, regulates the stomata formation. Required for the differentiation of stomatal guard cells, by promoting successive asymmetric cell divisions and the formation of guard mother cells. Promotes the conversion of the leaf epidermis into stomata. This chain is Transcription factor MUTE (MUTE), found in Arabidopsis thaliana (Mouse-ear cress).